An 81-amino-acid chain; its full sequence is Large ribosomal subunit protein bL27 (81 aa).

The span at 1-11 (MATSKSGGSSK) shows a compositional bias: polar residues. The disordered stretch occupies residues 1–26 (MATSKSGGSSKNGRDSISKRLGVKRS).

Belongs to the bacterial ribosomal protein bL27 family.

The sequence is that of Large ribosomal subunit protein bL27 from Borrelia turicatae (strain 91E135).